The following is a 305-amino-acid chain: Aspartate carbamoyltransferase catalytic subunit (305 aa).

Residues Arg-52 and Thr-53 each coordinate carbamoyl phosphate. Position 80 (Lys-80) interacts with L-aspartate. Positions 102, 132, and 135 each coordinate carbamoyl phosphate. 2 residues coordinate L-aspartate: Arg-165 and Arg-217. Carbamoyl phosphate-binding residues include Ala-258 and Pro-259.

The protein belongs to the aspartate/ornithine carbamoyltransferase superfamily. ATCase family. As to quaternary structure, heterododecamer (2C3:3R2) of six catalytic PyrB chains organized as two trimers (C3), and six regulatory PyrI chains organized as three dimers (R2).

The enzyme catalyses carbamoyl phosphate + L-aspartate = N-carbamoyl-L-aspartate + phosphate + H(+). Its pathway is pyrimidine metabolism; UMP biosynthesis via de novo pathway; (S)-dihydroorotate from bicarbonate: step 2/3. Catalyzes the condensation of carbamoyl phosphate and aspartate to form carbamoyl aspartate and inorganic phosphate, the committed step in the de novo pyrimidine nucleotide biosynthesis pathway. The polypeptide is Aspartate carbamoyltransferase catalytic subunit (Latilactobacillus sakei subsp. sakei (strain 23K) (Lactobacillus sakei subsp. sakei)).